The chain runs to 139 residues: MLGGDTPYDFAEKKYITRMNKDEINYLMTPVPKAVYKNRKSPIDLPFFNGKKQDAYGHLLDNVEKPIYKSGGQNVYANSWNGRTYGKKPAKAQPTDRLICEFCGKTYTRSNRSTHRKTEVCKAYQSMNKKLKDVLLRTD.

This is an uncharacterized protein from Sputnik virophage.